Reading from the N-terminus, the 618-residue chain is Syncytin-B (618 aa).

Positions 1-17 (MTGFWVLCFVLFPSSLS) are cleaved as a signal peptide. Residues 18–545 (YPESWMPLVN…SWGQWPDLGR (528 aa)) are Extracellular-facing. N-linked (GlcNAc...) asparagine glycosylation is present at Asn27. The CXXC motif lies at 44–47 (CWVC). Disulfide bonds link Cys44–Cys47, Cys44–Cys507, and Cys499–Cys506. 3 N-linked (GlcNAc...) asparagine glycosylation sites follow: Asn184, Asn274, and Asn357. The fusion peptide stretch occupies residues 422–442 (LFPFLAGLGISSALGTGIAGL). Positions 482-498 (LQNRRALDLITAEKGGT) are immunosuppression. The short motif at 499–507 (CLFLQEECC) is the CX6CC element. Residues 546–566 (WLPWLTPFLGPLLFLFFLLTF) form a helical membrane-spanning segment. Topologically, residues 567–618 (GSCLLNCLTRFVSQRLGSFVQDTAKRHVDSILQNFQYKKLPQDSPDEDTIPT) are cytoplasmic.

This sequence belongs to the gamma type-C retroviral envelope protein family. In terms of assembly, the mature protein consists of a trimer of SU-TM heterodimers. The SU-TM heterodimers are attached by a labile interchain disulfide bond. Synthesized as an inactive precursor that is heavily N-glycosylated and processed likely by furin in the Golgi to yield the mature SU and TM proteins. The cleavage site between SU and TM requires the minimal sequence [KR]-X-[KR]-R. In terms of processing, the CXXC motif is highly conserved across a broad range of retroviral envelope proteins. It is thought to participate in the formation of a labile disulfide bond possibly with the CX6CC motif present in the transmembrane protein. Isomerization of the intersubunit disulfide bond to an SU intrachain disulfide bond is thought to occur upon receptor recognition in order to allow membrane fusion. In terms of tissue distribution, highly expressed in placenta where it localizes to syncytiotrophoblasts of the labyrinthine zona. Specifically localizes to syncytiotrophoblast layer II (SynT-II). Also detected at very low levels in ovary.

It localises to the cell membrane. This endogenous retroviral envelope protein has retained its original fusogenic properties. Together with Syna, participates in trophoblast fusion and the formation of a syncytium during placenta morphogenesis. Synb is specifically involved in formation of syncytiotrophoblast layer II (SynT-II). Promotes myoblast fusion, and may play a role in regeneration of damaged muscle tissue in males. May have immunosuppressive activity. The polypeptide is Syncytin-B (Mus musculus (Mouse)).